The primary structure comprises 1493 residues: MSYPGKDKNIPGRIIEALEDLPLSYLVPKDGLAALVNAPMRVSLPFDKTIFTSADDGRDVNINVLGTANSTTSSIKNEAEKERLVFKRPSNFTSSANSVDYVPTNFLEGLSPLAQSVLSTHKGLNDSINIEKKSEIVSRPEAKHKLESVTSNAGNLSFNDNSSNKKTKTSTGVTMTQANLAEQYLNDLKNILDIVGFDQNSAEIGNIEYWLQLPNKKFVLTTNCLTKLQMTIKNITDNPQLSNSIEITWLLRLLDVMVCNIKFSKSSLKMGLDDSMLRYIALLSTIVLFNIFLLGKNDSNLHRESYIMEPVNFLSDLIESLKILTIEYGSLKIEFDTFQEALELLPKYIRNGPFLDDNVTAKLVYIFSDLLMNNDIEATTNIQFQSFWDNVKRISSDILVSLFGSFDQQRGFIIEELLSHIEKLPTKRIQKKLRKVGNQNIYITDFTFTLMSMLENINCYSFCNQMKDIAPENIDLLKNEYKKQEEFLFNIVEHINDTILERFFKNPSALRYVIDNFVQDLLLLISSPQWPVTEKILSSLLKRLLSVYSPSMQVSANIETICLQLIGNIGSTIFDIKCSTRDHEDNNLIKMINYPETLPHFFKSFEECIAYNETIKCRRSATRFLWNLRLGTILILEEYTKDAKEQIITVDNELKKILEQIKDGGLGPELENREADFSTIKLDYFSILHAFELLNLYDPYLKLILSLLAKDKIKLRSTAIKCLSMLASKDKVILSNPMVKETIHRRLNDSSASVKDAILDLVSINSSYFEFYQQINNNYNDDSIMVRKHVLRINEKMYDETNDIVTKVYVIARILMKIEDEEDNIIDMARLILLNRWILKVHEVLDQPEKLKEISSSVLLVMSRVAIMNEKCSQLFDLFLNFYLLNKEAHSKEAYDKITHVLTILTDFLVQKIVELNSDDTNEKNSIVDKQNFLNLLAKFADSTVSFLTKDHITALYPYMVSDEKSDFHYYILQVFRCTFEKLANFKQKFLYDLETTLLSRLPKMNVREIDEAMPLIWSVATHRHDTARVAKACSSCLSHLHPYINKANNEEAAIVVDGKLQRLIYLSTGFARFCFPKPSNDKIAFLQEGETLYEHITKCLLVLSKDKITHVIRRVAVKNLTKLCGNHPKLFNSRHVLHLLDKEFQSDQLDIKLVILESLYDLFLLEERKSVRNTGVNSTLSSNSILKKKLLKTNRVEFANDGVCSALATRFLDNILQLCLLRDLKNSLVAIRLLKLILKFGYTNPSHSIPTVIALFASTSQYIRHVAYELLEDLFEKYETLVFSSLSRGVTKAIHYSIHTDEKYYYKHDHFLSLLEKLCGTGKKNGPKFFKVLKRIMQSYLDDITDLTSTNSSVQKSIFVLCTNISNITFVSQYDLVSLLKTIDLTTDRLKEVIMDEIGDNVSSLSVSEEKLSGIILIQLSLQDLGTYLLHLYGLRDDVLLLDIVEESELKNKQLPAKKPDISKFSAQLENIEQYSSNGKLLTYFRKHVKDT.

The residue at position 43 (S43) is a Phosphoserine; in mutant scc2-8A. Residue T67 is modified to Phosphothreonine. Residue S74 is modified to Phosphoserine; in mutant scc2-8A. Phosphoserine occurs at positions 127 and 157. Positions 151-170 (SNAGNLSFNDNSSNKKTKTS) are disordered. Residue S162 is modified to Phosphoserine; in mutant scc2-8A. Phosphoserine is present on S163. A phosphothreonine mark is found at T231 and T236. Phosphoserine is present on residues S305 and S320. T360 is subject to Phosphothreonine; in mutant scc2-8A. HEAT repeat units lie at residues 695–732 (NLYD…KDKV), 734–771 (LSNP…YFEF), 806–843 (TKVY…KVHE), and 1132–1169 (FNSR…LEER). S753 is subject to Phosphoserine. Residue S1179 is modified to Phosphoserine; in mutant scc2-8A. S1182 is subject to Phosphoserine. The residue at position 1183 (S1183) is a Phosphoserine; in mutant scc2-8A. A Phosphoserine modification is found at S1185. An HEAT 5 repeat occupies 1244-1281 (TNPSHSIPTVIALFASTSQYIRHVAYELLEDLFEKYET).

This sequence belongs to the SCC2/Nipped-B family. In terms of assembly, interacts with SCC4. Interacts with the cohesin complex, which is composed of: the SMC1 and SMC3 heterodimer attached via their hinge domain, MCD1/SCC1 which link them, and IRR1/SCC3, which interacts with MCD1. In terms of processing, phosphorylated at alternative sites Ser-43, Ser-74, Ser-162, Thr-360, Ser-1179 and Ser-1183 when the principal phosphorylation sites Thr-67, Ser-127, Ser-157, Ser-163, Thr-231, Thr-236, Ser-305 and Ser-320 are mutated to alanines.

The protein resides in the nucleus. Its subcellular location is the chromosome. The protein localises to the centromere. Functionally, plays a structural role in chromatin and is involved in sister chromatid cohesion. Forms a complex with SCC4 required for the stable association of the cohesin complex with chromatin, which may act by hydrolyzing ATP from SMC1 and SMC3 heads. Binds to the nucleosome-free promoter regions of ribosomal protein genes and tRNA genes. Involved in transcriptional regulation by cooperating with the RSC complex to maintain nucleosome exhaustion at its binding sites. The protein is Sister chromatid cohesion protein 2 (SCC2) of Saccharomyces cerevisiae (strain ATCC 204508 / S288c) (Baker's yeast).